Reading from the N-terminus, the 510-residue chain is Beta-glucosidase 12 (510 aa).

The N-terminal stretch at 1-24 (MAAAGAMPGGLLLTFLLLAVVASG) is a signal peptide. Gln53 provides a ligand contact to a beta-D-glucoside. Asn122 carries N-linked (GlcNAc...) asparagine glycosylation. A beta-D-glucoside contacts are provided by residues His157 and 202–203 (NE). Residue Glu203 is the Proton donor of the active site. Cystine bridges form between Cys208-Cys243 and Cys222-Cys230. The N-linked (GlcNAc...) asparagine glycan is linked to Asn229. Tyr346 is an a beta-D-glucoside binding site. N-linked (GlcNAc...) asparagine glycans are attached at residues Asn361 and Asn371. A beta-D-glucoside is bound at residue Glu417. Catalysis depends on Glu417, which acts as the Nucleophile. Asn425 carries an N-linked (GlcNAc...) asparagine glycan. Residues Trp466, 473–474 (EW), and Phe482 each bind a beta-D-glucoside.

Belongs to the glycosyl hydrolase 1 family.

The protein localises to the secreted. The enzyme catalyses Hydrolysis of terminal, non-reducing beta-D-glucosyl residues with release of beta-D-glucose.. Hydrolyzes p-nitrophenyl beta-D-glucoside, p-nitrophenyl beta-D-galactoside, p-nitrophenyl beta-D-xyloside, p-nitrophenyl beta-D-fucoside, p-nitrophenyl beta-L-arabinoside, cello-oligosaccharides and laminaribiose. The chain is Beta-glucosidase 12 from Oryza sativa subsp. indica (Rice).